The chain runs to 143 residues: Large ribosomal subunit protein uL15 (143 aa).

The disordered stretch occupies residues 1–52; it reads MELNSIQPADGAKHYKRRVGRGIGSGLGKTSGRGHKGQKSRSGGFHKVGFEG. Positions 21 to 31 are enriched in gly residues; the sequence is RGIGSGLGKTS.

This sequence belongs to the universal ribosomal protein uL15 family. As to quaternary structure, part of the 50S ribosomal subunit.

Its function is as follows. Binds to the 23S rRNA. This Janthinobacterium sp. (strain Marseille) (Minibacterium massiliensis) protein is Large ribosomal subunit protein uL15.